Reading from the N-terminus, the 981-residue chain is Protein deadlock (981 aa).

The required for interaction with rhi/rhino stretch occupies residues 1–60 (MEKLDKIRMSQKLSCWQHILTTLGTSSKTEQEWNTFFKGFLESWRKPYCIQTSCDPSIPL). Disordered stretches follow at residues 72-195 (LQEN…ACAP), 274-307 (IMDK…DDQL), 327-352 (SRNE…NKKE), 375-446 (LRKS…PNNI), 554-586 (GLDD…ETLK), and 642-662 (LVHQ…TAAR). Composition is skewed to polar residues over residues 104 to 113 (PSKSHSTGST) and 150 to 160 (NHTTSIFSKAQ). Residues 167–191 (KLSSTKKRPDTCAPTDDSRKNREPR) are compositionally biased toward basic and acidic residues. Residues 337–352 (EKVKLKGERPAQNKKE) show a composition bias toward basic and acidic residues. The segment covering 377 to 390 (KSVKKSAKQQKPRV) has biased composition (basic residues). Positions 409 to 419 (TQDKQSTHEMI) are enriched in basic and acidic residues. Over residues 422 to 446 (QAKTISEASGQQTSQVQSSLSPNNI) the composition is skewed to polar residues. Positions 652-662 (RNQRDEATAAR) are enriched in basic and acidic residues.

As to quaternary structure, component of the Rhino-Deadlock-Cutoff (RDC) complex, composed of rhi/rhino, del/deadlock and cuff/cutoff. Interacts (via N-terminus) with rhi/rhino (via C-terminus); this interaction is direct. Interacts (via C-terminus) with cuff/cutoff; this interaction is direct.

The protein resides in the nucleus. It localises to the cytoplasm. The protein localises to the cytoskeleton. It is found in the microtubule organizing center. Its subcellular location is the centrosome. The protein resides in the chromosome. In terms of biological role, developmental protein involved in oogenesis. Required for germline maintenance, stability of mitotic spindles, localization of patterning determinants, oocyte growth and fusome biogenesis in males and females. Also required for dorso-ventral and antero-posterior patterning of oocyte and eggshell. May be involved in microtubule function during oogenesis. Part of a rhi-dependent transcription machinery that enables the generation of piRNA precursors from heterochromatin while maintaining the suppression of transposon-encoded promoters and enhancers. Component of the RDC complex (rhi, del and cuff) which binds to repressive H3K9me3 marks in the piRNA clusters. RDC promotes the bidirectional transcription of piRNA clusters at these sites by interacting with Moonshiner which forms a complex with the transcription initiation factors TfIIA-S and Trf2. This mechanism allows transcription to occur in piRNA clusters despite the lack of proper promoter elements and in the presence of the repressive H3K9me3 mark. As part of the RDC complex, involved in suppression of splicing. The sequence is that of Protein deadlock (del) from Drosophila melanogaster (Fruit fly).